The primary structure comprises 183 residues: Porphobilinogen deaminase (183 aa).

This sequence belongs to the HMBS family. As to quaternary structure, monomer. Requires dipyrromethane as cofactor.

It carries out the reaction 4 porphobilinogen + H2O = hydroxymethylbilane + 4 NH4(+). It functions in the pathway porphyrin-containing compound metabolism; protoporphyrin-IX biosynthesis; coproporphyrinogen-III from 5-aminolevulinate: step 2/4. In terms of biological role, tetrapolymerization of the monopyrrole PBG into the hydroxymethylbilane pre-uroporphyrinogen in several discrete steps. The polypeptide is Porphobilinogen deaminase (hemC) (Yersinia intermedia).